Consider the following 472-residue polypeptide: Eukaryotic translation initiation factor 2 subunit 3 (472 aa).

At Ala2 the chain carries N-acetylalanine; partial. Ser16 bears the Phosphoserine mark. The 210-residue stretch at 39 to 248 (QATINIGTIG…IVKKIPVPPR (210 aa)) folds into the tr-type G domain. The segment at 48–55 (GHVAHGKS) is G1. Residue 51-56 (AHGKST) coordinates GTP. The interval 76–80 (NITIK) is G2. A G3 region spans residues 134–137 (DCPG). GTP is bound by residues 190 to 193 (NKID) and 225 to 227 (SAQ). The G4 stretch occupies residues 190 to 193 (NKID). Positions 225–227 (SAQ) are G5. Residues 457–469 (GQIRRGVTIKPTV) are interacts with CDC123.

Belongs to the TRAFAC class translation factor GTPase superfamily. Classic translation factor GTPase family. EIF2G subfamily. In terms of assembly, eukaryotic translation initiation factor 2 eIF2 is a heterotrimeric complex composed of an alpha (EIF2S1), a beta (EIF2S2) and a gamma (EIF2S3) chain. eIF2 is member of the 43S pre-initiation complex (43S PIC). Interacts (via C-terminus) with CDC123; the interaction is direct. Expressed in testis, brain, liver and muscle.

The protein localises to the cytoplasm. The protein resides in the cytosol. The enzyme catalyses GTP + H2O = GDP + phosphate + H(+). Its function is as follows. Member of the eIF2 complex that functions in the early steps of protein synthesis by forming a ternary complex with GTP and initiator tRNA. This complex binds to a 40S ribosomal subunit, followed by mRNA binding to form the 43S pre-initiation complex (43S PIC). Junction of the 60S ribosomal subunit to form the 80S initiation complex is preceded by hydrolysis of the GTP bound to eIF2 and release of an eIF2-GDP binary complex. In order for eIF2 to recycle and catalyze another round of initiation, the GDP bound to eIF2 must exchange with GTP by way of a reaction catalyzed by eIF-2B. This is Eukaryotic translation initiation factor 2 subunit 3 (EIF2S3) from Homo sapiens (Human).